Here is a 396-residue protein sequence, read N- to C-terminus: MTKSEKIIELTNHYGAHNYLPLPIVISEAEGVWVKDPEGNKYMDMLSAYSAVNQGHRHPKIIQALKDQADKVTLVSRAFHSDNLGEWYEKICKLAGKDKALPMNTGAEAVETALKAARRWAYDVKGIEPNKAEIIAFNGNFHGRTMAPVSLSSEAEYQRGYGPLLDGFRKVDFGDVDALKAAINENTAAVLVEPIQGEAGINIPPEGYLKAIRELCDEHNVLFIADEIQAGLGRSGKLFATDWDNVKPDVYILGKALGGGVFPISVVLADKEVLDVFTPGSHGSTFGGNPLACAASIAALDVIVDEDLPGRSLELGDYFKEQLKQIDHPSIKEVRGRGLFIGVELNESARPYCEALKEEGLLCKETHDTVIRFAPPLIITKEELDLALEKIRHVFQ.

Lys-255 is subject to N6-(pyridoxal phosphate)lysine.

It belongs to the class-III pyridoxal-phosphate-dependent aminotransferase family. OAT subfamily. Pyridoxal 5'-phosphate is required as a cofactor.

It is found in the cytoplasm. The enzyme catalyses a 2-oxocarboxylate + L-ornithine = L-glutamate 5-semialdehyde + an L-alpha-amino acid. It functions in the pathway amino-acid biosynthesis; L-proline biosynthesis; L-glutamate 5-semialdehyde from L-ornithine: step 1/1. In terms of biological role, catalyzes the interconversion of ornithine to glutamate semialdehyde. In Staphylococcus aureus (strain COL), this protein is Ornithine aminotransferase 2.